A 214-amino-acid polypeptide reads, in one-letter code: Probable chorismate pyruvate-lyase (214 aa).

Positions 74, 112, and 173 each coordinate substrate. The segment at alanine 183–serine 214 is disordered. Positions arginine 197–serine 214 are enriched in basic and acidic residues.

The protein belongs to the UbiC family.

The protein resides in the cytoplasm. The enzyme catalyses chorismate = 4-hydroxybenzoate + pyruvate. The protein operates within cofactor biosynthesis; ubiquinone biosynthesis. Removes the pyruvyl group from chorismate, with concomitant aromatization of the ring, to provide 4-hydroxybenzoate (4HB) for the ubiquinone pathway. The protein is Probable chorismate pyruvate-lyase of Cupriavidus metallidurans (strain ATCC 43123 / DSM 2839 / NBRC 102507 / CH34) (Ralstonia metallidurans).